The chain runs to 617 residues: Probable potassium transport system protein Kup 3 (617 aa).

11 helical membrane passes run 42 to 62, 95 to 115, 129 to 149, 160 to 180, 206 to 226, 240 to 260, 282 to 302, 330 to 350, 360 to 380, 386 to 406, and 411 to 431; these read VASLILWALLLIISLKYALLI, LVVGLVGAALLYGDGAITPAI, PSLAPAVVPVTVVILVGLFMM, IFGPVMLAWFAVLAALGIHGI, VSFAILGAAFLAVTGGEAMYA, WFAICLPALVLNYFGQAALLI, LVAFSAVATVIASQAIISGVF, IYVPLVNWLLAAATLGAVLSF, YGIAVSLLMAITTLLAALVAI, PWLVVAVNGAFFVIDVIFFSA, and LFEGGWFPLLLAALVAFMMLT.

This sequence belongs to the HAK/KUP transporter (TC 2.A.72) family.

It is found in the cell inner membrane. It catalyses the reaction K(+)(in) + H(+)(in) = K(+)(out) + H(+)(out). Functionally, transport of potassium into the cell. Likely operates as a K(+):H(+) symporter. The polypeptide is Probable potassium transport system protein Kup 3 (Bradyrhizobium diazoefficiens (strain JCM 10833 / BCRC 13528 / IAM 13628 / NBRC 14792 / USDA 110)).